Reading from the N-terminus, the 295-residue chain is Ent-pimara-9(11),15-diene synthase (295 aa).

Belongs to the terpene synthase family. In terms of assembly, monomer. A divalent metal cation serves as cofactor.

It carries out the reaction ent-copalyl diphosphate = ent-pimara-9(11),15-diene + diphosphate. Its pathway is antibiotic biosynthesis. Involved in viguiepinol biosynthesis. Catalyzes the conversion of copalyl diphosphate (ent-CDP) into pimara-9(11),15-diene (PMD). In Streptomyces sp. (strain KO-3988), this protein is Ent-pimara-9(11),15-diene synthase.